The chain runs to 176 residues: Interleukin-7 (176 aa).

The signal sequence occupies residues 1–25; the sequence is MFHVSFRYIFGIPPLILVLLPVASS. 3 disulfide bridges follow: Cys27/Cys165, Cys58/Cys153, and Cys71/Cys116. 3 N-linked (GlcNAc...) asparagine glycosylation sites follow: Asn94, Asn115, and Asn140. Positions 118–143 are disordered; sequence SKGKGRKPPSLSEAQPTKNLEENKSS.

This sequence belongs to the IL-7/IL-9 family. Interacts with IL7R and CSF2RG.

It localises to the secreted. Its function is as follows. Hematopoietic cytokine that plays an essential role in the development, expansion, and survival of naive and memory T-cells and B-cells thereby regulating the number of mature lymphocytes and maintaining lymphoid homeostasis. Mechanistically, exerts its biological effects through a receptor composed of IL7RA subunit and the cytokine receptor common subunit gamma/CSF2RG. Binding to the receptor leads to activation of various kinases including JAK1 or JAK3 depending on the cell type and subsequently propagation of signals through activation of several downstream signaling pathways including the PI3K/Akt/mTOR or the JAK-STAT5. This chain is Interleukin-7 (IL7), found in Bos taurus (Bovine).